Here is a 378-residue protein sequence, read N- to C-terminus: UPF0754 membrane protein BCE_0952 (378 aa).

2 helical membrane-spanning segments follow: residues 1–21 (MNIWLSMLTTTGLGAIIGGFT) and 357–377 (YLGALLGGMIGIVQGLLLLFL).

This sequence belongs to the UPF0754 family.

It is found in the cell membrane. This chain is UPF0754 membrane protein BCE_0952, found in Bacillus cereus (strain ATCC 10987 / NRS 248).